Reading from the N-terminus, the 551-residue chain is Membrane protein insertase YidC (551 aa).

The helical transmembrane segment at 3 to 23 (ANHIRILLLVTIAIMLISLMG) threads the bilayer. The span at 30-43 (PSNSSQSQTTQTQQ) shows a compositional bias: low complexity. Positions 30–61 (PSNSSQSQTTQTQQDNSHYNSDTPATTNVSTS) are disordered. The segment covering 44-61 (DNSHYNSDTPATTNVSTS) has biased composition (polar residues). Transmembrane regions (helical) follow at residues 361-381 (LVGN…LIFY), 431-451 (LSGC…YWVL), and 504-524 (IMMF…SGLV).

The protein belongs to the OXA1/ALB3/YidC family. Type 1 subfamily. In terms of assembly, interacts with the Sec translocase complex via SecD. Specifically interacts with transmembrane segments of nascent integral membrane proteins during membrane integration.

It localises to the cell inner membrane. Required for the insertion and/or proper folding and/or complex formation of integral membrane proteins into the membrane. Involved in integration of membrane proteins that insert both dependently and independently of the Sec translocase complex, as well as at least some lipoproteins. Aids folding of multispanning membrane proteins. The sequence is that of Membrane protein insertase YidC from Francisella philomiragia subsp. philomiragia (strain ATCC 25017 / CCUG 19701 / FSC 153 / O#319-036).